A 168-amino-acid polypeptide reads, in one-letter code: Crossover junction endodeoxyribonuclease RuvC (168 aa).

Active-site residues include Asp9, Glu70, and Asp145. 3 residues coordinate Mg(2+): Asp9, Glu70, and Asp145.

It belongs to the RuvC family. In terms of assembly, homodimer which binds Holliday junction (HJ) DNA. The HJ becomes 2-fold symmetrical on binding to RuvC with unstacked arms; it has a different conformation from HJ DNA in complex with RuvA. In the full resolvosome a probable DNA-RuvA(4)-RuvB(12)-RuvC(2) complex forms which resolves the HJ. Mg(2+) is required as a cofactor.

The protein resides in the cytoplasm. It catalyses the reaction Endonucleolytic cleavage at a junction such as a reciprocal single-stranded crossover between two homologous DNA duplexes (Holliday junction).. In terms of biological role, the RuvA-RuvB-RuvC complex processes Holliday junction (HJ) DNA during genetic recombination and DNA repair. Endonuclease that resolves HJ intermediates. Cleaves cruciform DNA by making single-stranded nicks across the HJ at symmetrical positions within the homologous arms, yielding a 5'-phosphate and a 3'-hydroxyl group; requires a central core of homology in the junction. The consensus cleavage sequence is 5'-(A/T)TT(C/G)-3'. Cleavage occurs on the 3'-side of the TT dinucleotide at the point of strand exchange. HJ branch migration catalyzed by RuvA-RuvB allows RuvC to scan DNA until it finds its consensus sequence, where it cleaves and resolves the cruciform DNA. This Chlamydia felis (strain Fe/C-56) (Chlamydophila felis) protein is Crossover junction endodeoxyribonuclease RuvC.